We begin with the raw amino-acid sequence, 231 residues long: NADH-ubiquinone oxidoreductase chain 4 (231 aa).

Transmembrane regions (helical) follow at residues 1–21 (PIAGSMILAAILLKLGGYGII), 34–54 (VFLPFIVLALWGAILANLTCL), 63–85 (IAYSSISHMGLVVAAIIIQTPWG), 89–111 (AMALMIAHGFTSSALFCLANTTY), 128–148 (MMPMATTWWLMANLMNIAIPP), 169–189 (TIIMLGLSMLITASYSLHMFL), and 211–231 (LLMTLHLIPLLMISFKPELVT).

This sequence belongs to the complex I subunit 4 family.

The protein resides in the mitochondrion membrane. The catalysed reaction is a ubiquinone + NADH + 5 H(+)(in) = a ubiquinol + NAD(+) + 4 H(+)(out). Its function is as follows. Core subunit of the mitochondrial membrane respiratory chain NADH dehydrogenase (Complex I) that is believed to belong to the minimal assembly required for catalysis. Complex I functions in the transfer of electrons from NADH to the respiratory chain. The immediate electron acceptor for the enzyme is believed to be ubiquinone. The sequence is that of NADH-ubiquinone oxidoreductase chain 4 (MT-ND4) from Sistrurus miliarius (Pigmy rattlesnake).